The chain runs to 424 residues: Insertion element IS2A uncharacterized 48.2 kDa protein (424 aa).

One can recognise an Integrase catalytic domain in the interval 229 to 412; it reads KPAVPPSKRA…SPREYLRHGA (184 aa).

The protein belongs to the transposase 8 family.

This Escherichia coli protein is Insertion element IS2A uncharacterized 48.2 kDa protein.